Reading from the N-terminus, the 258-residue chain is 5-oxoprolinase subunit A 2 (258 aa).

It belongs to the LamB/PxpA family. As to quaternary structure, forms a complex composed of PxpA, PxpB and PxpC.

It catalyses the reaction 5-oxo-L-proline + ATP + 2 H2O = L-glutamate + ADP + phosphate + H(+). Functionally, catalyzes the cleavage of 5-oxoproline to form L-glutamate coupled to the hydrolysis of ATP to ADP and inorganic phosphate. The protein is 5-oxoprolinase subunit A 2 of Pseudomonas putida (strain ATCC 47054 / DSM 6125 / CFBP 8728 / NCIMB 11950 / KT2440).